The chain runs to 603 residues: Serine/threonine-protein kinase HAL4/SAT4 (603 aa).

Composition is skewed to polar residues over residues methionine 1–threonine 15, arginine 30–lysine 60, and threonine 68–glycine 85. Disordered regions lie at residues methionine 1–valine 86, leucine 150–threonine 171, and aspartate 267–isoleucine 301. Positions asparagine 159 to threonine 171 are enriched in low complexity. The span at proline 282–asparagine 296 shows a compositional bias: basic and acidic residues. The Protein kinase domain occupies glycine 316–glycine 590. ATP-binding positions include leucine 322 to valine 330 and lysine 353. The Proton acceptor role is filled by aspartate 449.

The protein belongs to the protein kinase superfamily. Ser/Thr protein kinase family.

The enzyme catalyses L-seryl-[protein] + ATP = O-phospho-L-seryl-[protein] + ADP + H(+). It carries out the reaction L-threonyl-[protein] + ATP = O-phospho-L-threonyl-[protein] + ADP + H(+). Functionally, promotes K(+) uptake, by the potassium transporter TRK1-TRK2, which leads to the subsequent cellular resistance to toxic cations such as Na(+), Li(+) and Ca(2+). The sequence is that of Serine/threonine-protein kinase HAL4/SAT4 (SAT4) from Saccharomyces cerevisiae (strain ATCC 204508 / S288c) (Baker's yeast).